A 338-amino-acid chain; its full sequence is Phenylalanine--tRNA ligase alpha subunit (338 aa).

Position 253 (Glu-253) interacts with Mg(2+).

The protein belongs to the class-II aminoacyl-tRNA synthetase family. Phe-tRNA synthetase alpha subunit type 1 subfamily. As to quaternary structure, tetramer of two alpha and two beta subunits. Requires Mg(2+) as cofactor.

Its subcellular location is the cytoplasm. It carries out the reaction tRNA(Phe) + L-phenylalanine + ATP = L-phenylalanyl-tRNA(Phe) + AMP + diphosphate + H(+). In Citrifermentans bemidjiense (strain ATCC BAA-1014 / DSM 16622 / JCM 12645 / Bem) (Geobacter bemidjiensis), this protein is Phenylalanine--tRNA ligase alpha subunit.